A 625-amino-acid polypeptide reads, in one-letter code: Beta-galactosidase large subunit (625 aa).

The active-site Proton donor is the E465. E533 acts as the Nucleophile in catalysis.

This sequence belongs to the glycosyl hydrolase 2 family. In terms of assembly, heterodimer of a large (LacL) and a small subunit (LacM).

It carries out the reaction Hydrolysis of terminal non-reducing beta-D-galactose residues in beta-D-galactosides.. Functionally, component of a beta-galactosidase. The polypeptide is Beta-galactosidase large subunit (Latilactobacillus sakei (Lactobacillus sakei)).